Consider the following 72-residue polypeptide: Alpha-elapitoxin-Ast2b (72 aa).

5 disulfides stabilise this stretch: Cys-3/Cys-20, Cys-13/Cys-41, Cys-26/Cys-30, Cys-45/Cys-56, and Cys-57/Cys-62. Arg-72 is subject to Arginine amide.

Belongs to the three-finger toxin family. Long-chain subfamily. Type II alpha-neurotoxin sub-subfamily. Expressed by the venom gland.

It is found in the secreted. Functionally, binds with high affinity to muscular (alpha-1/CHRNA1) and neuronal (alpha-7/CHRNA7) nicotinic acetylcholine receptor (nAChR) and inhibits acetylcholine from binding to the receptor, thereby impairing neuromuscular and neuronal transmission. This chain is Alpha-elapitoxin-Ast2b, found in Hydrophis stokesii (Stokes's sea snake).